A 146-amino-acid chain; its full sequence is Hemoglobin cathodic subunit beta (146 aa).

In terms of domain architecture, Globin spans 2-146 (QWSSSERSVI…VVSGLSKQYF (145 aa)). Position 63 (His-63) interacts with heme b.

As to quaternary structure, heterotetramer of two alpha and two beta chains. In terms of tissue distribution, red blood cells.

Involved in oxygen transport from the gills to various peripheral tissues. The polypeptide is Hemoglobin cathodic subunit beta (Ophisurus serpens (Serpent eel)).